We begin with the raw amino-acid sequence, 274 residues long: Transmembrane O-methyltransferase (274 aa).

Residues 14–34 (VGTMSPAIALAFLPLVVTLLV) form a helical membrane-spanning segment. Residues Glu-120, 122–123 (GT), Ser-128, Glu-146, and Ser-176 each bind S-adenosyl-L-methionine.

Belongs to the class I-like SAM-binding methyltransferase superfamily. Cation-dependent O-methyltransferase family. Interacts with LHFPL5, PCDH15, TMC1, TMC2 and TMIE. Interacts directly with TMC1. The interaction of TOMT with TMC1 and TMC2 is required for the transportation of TMC1/2 into the stereocilia of hair cells.

Its subcellular location is the membrane. It localises to the cytoplasm. It is found in the endoplasmic reticulum. The catalysed reaction is a catechol + S-adenosyl-L-methionine = a guaiacol + S-adenosyl-L-homocysteine + H(+). Catalyzes the O-methylation, and thereby the inactivation, of catecholamine neurotransmitters and catechol hormones. Required for auditory function. Component of the cochlear hair cell's mechanotransduction (MET) machinery. Involved in the assembly of the asymmetric tip-link MET complex. Required for transportation of TMC1 and TMC2 proteins into the mechanically sensitive stereocilia of the hair cells. The function in MET is independent of the enzymatic activity. The sequence is that of Transmembrane O-methyltransferase from Propithecus coquereli (Coquerel's sifaka).